The chain runs to 348 residues: VIP36-like protein (348 aa).

A signal peptide spans M1–G38. Over P39 to A313 the chain is Lumenal. The L-type lectin-like domain occupies E49–L274. Residues S93 and D128 each coordinate a carbohydrate. Positions 159, 161, and 163 each coordinate Ca(2+). Y161 to N163 contacts a carbohydrate. Residue N181 is glycosylated (N-linked (GlcNAc...) asparagine). H188 lines the a carbohydrate pocket. D191 contributes to the Ca(2+) binding site. C200 and C237 are disulfide-bonded. G258–L260 lines the a carbohydrate pocket. A helical membrane pass occupies residues L314–I334. The Cytoplasmic portion of the chain corresponds to L335 to Y348. Residues R344–R346 carry the Endoplasmic reticulum retention signal motif.

It localises to the endoplasmic reticulum membrane. The protein resides in the golgi apparatus membrane. In terms of biological role, may be involved in the regulation of export from the endoplasmic reticulum of a subset of glycoproteins. May function as a regulator of ERGIC-53. This is VIP36-like protein (LMAN2L) from Pongo abelii (Sumatran orangutan).